Consider the following 281-residue polypeptide: BURP domain-containing protein BNM2C (281 aa).

Residues 1-25 form the signal peptide; it reads MASLRFSVTFPALFSLLLSLWVVDA. The 223-residue stretch at 59-281 folds into the BURP domain; it reads FFKISDLKLG…PLDNIVWVSK (223 aa).

In terms of tissue distribution, expressed in the radicle of germinating seeds 2 days post-imbibition (DPI) and in roots of 30-DPI young plants. Expressed in the embryo and seed coat tissues of developing seeds. The protein accumulates only in seeds and only long after transcript accumulation becomes evident.

It is found in the protein storage vacuole. The protein is BURP domain-containing protein BNM2C of Brassica napus (Rape).